Here is a 486-residue protein sequence, read N- to C-terminus: Cardiolipin synthase A (486 aa).

The next 2 membrane-spanning stretches (helical) occupy residues 3-23 and 38-58; these read TFYTVISWLSVFGYWLLIAGV and MAWLLIIYILPLVGIIAYLSF. PLD phosphodiesterase domains are found at residues 219–246 and 399–426; these read MDLRQHRKIVLIDNYVAYTGSMNMVDPR and EGGLLHSKSVLVDGQLSLVGTVNLDMRS. Residues histidine 224, lysine 226, aspartate 231, histidine 404, lysine 406, and aspartate 411 contribute to the active site.

The protein belongs to the phospholipase D family. Cardiolipin synthase subfamily. ClsA sub-subfamily.

The protein resides in the cell inner membrane. The enzyme catalyses 2 a 1,2-diacyl-sn-glycero-3-phospho-(1'-sn-glycerol) = a cardiolipin + glycerol. Catalyzes the reversible phosphatidyl group transfer from one phosphatidylglycerol molecule to another to form cardiolipin (CL) (diphosphatidylglycerol) and glycerol. This Yersinia pseudotuberculosis serotype O:3 (strain YPIII) protein is Cardiolipin synthase A.